Reading from the N-terminus, the 376-residue chain is Protein RecA (376 aa).

79-86 (GPESSGKT) lines the ATP pocket. The tract at residues 357 to 376 (AAARAATDKPVETKGANAAA) is disordered.

The protein belongs to the RecA family.

It localises to the cytoplasm. Can catalyze the hydrolysis of ATP in the presence of single-stranded DNA, the ATP-dependent uptake of single-stranded DNA by duplex DNA, and the ATP-dependent hybridization of homologous single-stranded DNAs. It interacts with LexA causing its activation and leading to its autocatalytic cleavage. The protein is Protein RecA of Synechococcus sp. (strain CC9902).